Consider the following 212-residue polypeptide: 3-isopropylmalate dehydratase small subunit (212 aa).

It belongs to the LeuD family. LeuD type 1 subfamily. As to quaternary structure, heterodimer of LeuC and LeuD.

The catalysed reaction is (2R,3S)-3-isopropylmalate = (2S)-2-isopropylmalate. It functions in the pathway amino-acid biosynthesis; L-leucine biosynthesis; L-leucine from 3-methyl-2-oxobutanoate: step 2/4. Catalyzes the isomerization between 2-isopropylmalate and 3-isopropylmalate, via the formation of 2-isopropylmaleate. The protein is 3-isopropylmalate dehydratase small subunit of Pseudomonas aeruginosa (strain UCBPP-PA14).